The chain runs to 468 residues: Sulfate adenylyltransferase subunit 1 (468 aa).

The tr-type G domain maps to 22 to 239 (KELLRFLTCG…TVEIASDKNA (218 aa)). A G1 region spans residues 31–38 (GSVDDGKS). 31–38 (GSVDDGKS) is a binding site for GTP. The interval 89–93 (GITID) is G2. A G3 region spans residues 110-113 (DTPG). GTP is bound by residues 110–114 (DTPGH) and 165–168 (NKMD). The interval 165 to 168 (NKMD) is G4. Residues 202 to 204 (SAL) are G5.

The protein belongs to the TRAFAC class translation factor GTPase superfamily. Classic translation factor GTPase family. CysN/NodQ subfamily. Heterodimer composed of CysD, the smaller subunit, and CysN.

It carries out the reaction sulfate + ATP + H(+) = adenosine 5'-phosphosulfate + diphosphate. It functions in the pathway sulfur metabolism; hydrogen sulfide biosynthesis; sulfite from sulfate: step 1/3. Functionally, with CysD forms the ATP sulfurylase (ATPS) that catalyzes the adenylation of sulfate producing adenosine 5'-phosphosulfate (APS) and diphosphate, the first enzymatic step in sulfur assimilation pathway. APS synthesis involves the formation of a high-energy phosphoric-sulfuric acid anhydride bond driven by GTP hydrolysis by CysN coupled to ATP hydrolysis by CysD. The protein is Sulfate adenylyltransferase subunit 1 of Teredinibacter turnerae (strain ATCC 39867 / T7901).